The chain runs to 645 residues: MAATASAIRYAPEDPNLPKPWKGLVDSRTGYLYFWNPETNVTQYERPASSAPPKLAAIPVSSSVQTNQQSSSGFNSGKEDDKYGRGSDGPKSDSGSRFNEAGRTGPISSNDAASGLGNASSGGSSARGPPSSAAGNELSPEAYCRKHEITVSGGQVPPPLMSFEATGLPNELLREVYSAGFSAPSPIQAQSWPIAMQNRDIVAIAKTGSGKTLGYLIPGFMHLQRIHNDSRMGPTILVLSPTRELATQIQVEALKFGKSSKISCACLYGGAPKGPQLKEIERGVDIVVATPGRLNDILEMKRISLHQVSYLVLDEADRMLDMGFEPQIRKIVNEVPTKRQTLMYTATWPKEVRKIAADLLVNPAQVNIGNVDELVANKSITQTIEVLAPMEKHSRLEQILRSQEPGSKIIIFCSTKRMCDQLARNLTRTFGAAAIHGDKSQAERDDVLNQFRSGRTPVLVATDVAARGLDVKDIRVVVNYDFPNGVEDYVHRIGRTGRAGATGLAYTFFGDQDAKHASDLIKILEGANQKVPPQVREMATRGGGGMNKFRRWGTPSSGGGGGRGGYGDSGYGGRGESGYGSRGDSGYGGRGDSGGRGSWAPSRDSSGSSGWGRERSRSPERFRGGPPSTSSPPRSFHEAMMMKNR.

Disordered regions lie at residues 1 to 22 and 44 to 137; these read MAATASAIRYAPEDPNLPKPWK and YERP…AGNE. The region spanning 15–49 is the WW domain; that stretch reads PNLPKPWKGLVDSRTGYLYFWNPETNVTQYERPAS. The segment covering 60–72 has biased composition (low complexity); the sequence is VSSSVQTNQQSSS. Residues 77–91 show a composition bias toward basic and acidic residues; sequence GKEDDKYGRGSDGPK. Residues 108–136 show a composition bias toward low complexity; it reads SSNDAASGLGNASSGGSSARGPPSSAAGN. Residues 161–189 carry the Q motif motif; sequence MSFEATGLPNELLREVYSAGFSAPSPIQA. In terms of domain architecture, Helicase ATP-binding spans 192–366; the sequence is WPIAMQNRDI…ADLLVNPAQV (175 aa). 205-212 lines the ATP pocket; it reads AKTGSGKT. The short motif at 314–317 is the DEAD box element; that stretch reads DEAD. The 145-residue stretch at 395–539 folds into the Helicase C-terminal domain; that stretch reads RLEQILRSQE…KVPPQVREMA (145 aa). Positions 532–645 are disordered; it reads PPQVREMATR…FHEAMMMKNR (114 aa). The segment covering 556–597 has biased composition (gly residues); it reads SSGGGGGRGGYGDSGYGGRGESGYGSRGDSGYGGRGDSGGRG. Low complexity predominate over residues 598–608; it reads SWAPSRDSSGS. Residues 612–623 show a composition bias toward basic and acidic residues; that stretch reads GRERSRSPERFR. Positions 624-634 are enriched in low complexity; that stretch reads GGPPSTSSPPR.

Belongs to the DEAD box helicase family. DDX5/DBP2 subfamily.

The catalysed reaction is ATP + H2O = ADP + phosphate + H(+). The sequence is that of DEAD-box ATP-dependent RNA helicase 46 (RH46) from Arabidopsis thaliana (Mouse-ear cress).